The chain runs to 185 residues: Peptidyl-tRNA hydrolase (185 aa).

Residue tyrosine 14 coordinates tRNA. Histidine 19 acts as the Proton acceptor in catalysis. TRNA-binding residues include tyrosine 65, asparagine 67, and asparagine 113.

The protein belongs to the PTH family. Monomer.

The protein localises to the cytoplasm. The catalysed reaction is an N-acyl-L-alpha-aminoacyl-tRNA + H2O = an N-acyl-L-amino acid + a tRNA + H(+). Its function is as follows. Hydrolyzes ribosome-free peptidyl-tRNAs (with 1 or more amino acids incorporated), which drop off the ribosome during protein synthesis, or as a result of ribosome stalling. Functionally, catalyzes the release of premature peptidyl moieties from peptidyl-tRNA molecules trapped in stalled 50S ribosomal subunits, and thus maintains levels of free tRNAs and 50S ribosomes. This chain is Peptidyl-tRNA hydrolase, found in Rickettsia akari (strain Hartford).